Reading from the N-terminus, the 235-residue chain is Transmembrane emp24 domain-containing protein 9 (235 aa).

Positions 1–37 (MAVELGVLLVRPRPGTGLGRVMRTLLLVLWLATRGSA) are cleaved as a signal peptide. The Lumenal portion of the chain corresponds to 38–202 (LYFHIGETEK…RQTSESTNQR (165 aa)). The GOLD domain maps to 47–145 (KKCFIEEIPD…MLRVHLDIQV (99 aa)). A required for interaction with STX17 region spans residues 121 to 160 (CLHSNSTKFSLFAGGMLRVHLDIQVGEHANDYAEIAAKDK). N-linked (GlcNAc...) asparagine glycosylation occurs at N125. Positions 154–184 (EIAAKDKLSELQLRVRQLVEQVEQIQKEQNY) form a coiled coil. Position 160 is an N6-acetyllysine (K160). A helical transmembrane segment spans residues 203 to 222 (VLWWSILQTLILVAIGVWQM). Residues 223 to 235 (RHLKSFFEAKKLV) lie on the Cytoplasmic side of the membrane. A COPII vesicle coat-binding motif is present at residues 228 to 229 (FF). A COPI vesicle coat-binding motif is present at residues 228-235 (FFEAKKLV).

This sequence belongs to the EMP24/GP25L family. As to quaternary structure, monomer and homodimer in endoplasmic reticulum. Predominantly monomeric and to lesser extent homodimeric in endoplasmic reticulum-Golgi intermediate compartment and cis-Golgi network. Probably oligomerizes with other members of the EMP24/GP25L family such as TMED2, TMED7 and TMED10. Interacts with TMED5. Interacts (via C-terminus) with COPG1; the interaction involves dimeric TMED9. Interacts with PTPN2 and SPAST. Interacts with STX17; the interaction is direct. N-linked glycosylated containing high mannose.

It localises to the endoplasmic reticulum membrane. The protein localises to the golgi apparatus. It is found in the cis-Golgi network membrane. Its subcellular location is the endoplasmic reticulum-Golgi intermediate compartment membrane. The protein resides in the trans-Golgi network membrane. Functionally, appears to be involved in vesicular protein trafficking, mainly in the early secretory pathway. In COPI vesicle-mediated retrograde transport involved in the coatomer recruitment to membranes of the early secretory pathway. Increases coatomer-dependent activity of ARFGAP2. Thought to play a crucial role in the specific retention of p24 complexes in cis-Golgi membranes; specifically contributes to the coupled localization of TMED2 and TMED10 in the cis-Golgi network. May be involved in organization of intracellular membranes, such as of the ER-Golgi intermediate compartment and the Golgi apparatus. Involved in ER localization of PTPN2 isoform PTPB. This is Transmembrane emp24 domain-containing protein 9 (TMED9) from Homo sapiens (Human).